The chain runs to 94 residues: Large ribosomal subunit protein bL31 (94 aa).

The tract at residues 64–94 (KYGMANPDEDSTKNTKSSKKETSEDSSSKGS) is disordered. Basic and acidic residues predominate over residues 73 to 94 (DSTKNTKSSKKETSEDSSSKGS).

It belongs to the bacterial ribosomal protein bL31 family. Type A subfamily. In terms of assembly, part of the 50S ribosomal subunit.

Its function is as follows. Binds the 23S rRNA. This is Large ribosomal subunit protein bL31 from Prochlorococcus marinus (strain SARG / CCMP1375 / SS120).